The primary structure comprises 223 residues: Neurotrophic factor BDNF precursor form (223 aa).

The signal sequence occupies residues 1 to 5; the sequence is SCMKA. A propeptide spanning residues 6-114 is cleaved from the precursor; sequence APMKEVSIRG…AANMSMRVRR (109 aa). Residue N107 is glycosylated (N-linked (GlcNAc...) asparagine). Intrachain disulfides connect C127/C194 and C172/C223.

This sequence belongs to the NGF-beta family.

It localises to the secreted. Promotes the survival of neuronal populations that are all located either in the central nervous system or directly connected to it. The protein is Neurotrophic factor BDNF precursor form (BDNF) of Eryx colubrinus colubrinus.